A 224-amino-acid polypeptide reads, in one-letter code: Putative O-methyltransferase MUL_4520 (224 aa).

Residues 1–11 are compositionally biased toward polar residues; it reads MHGTDSSSDTP. Residues 1–20 are disordered; sequence MHGTDSSSDTPGQPAPSRAE. Residues valine 51, glutamate 73, 75–76, serine 81, aspartate 99, and isoleucine 100 contribute to the S-adenosyl-L-methionine site; that span reads GT. A substrate-binding site is contributed by aspartate 147. Aspartate 149 provides a ligand contact to S-adenosyl-L-methionine.

It belongs to the class I-like SAM-binding methyltransferase superfamily. Cation-dependent O-methyltransferase family.

The chain is Putative O-methyltransferase MUL_4520 from Mycobacterium ulcerans (strain Agy99).